A 140-amino-acid polypeptide reads, in one-letter code: Nucleoside diphosphate kinase (140 aa).

Residues Lys-11, Phe-59, Arg-87, Thr-93, Arg-104, and Asn-114 each contribute to the ATP site. The active-site Pros-phosphohistidine intermediate is His-117.

Belongs to the NDK family. Homotetramer. Mg(2+) serves as cofactor.

The protein localises to the cytoplasm. It catalyses the reaction a 2'-deoxyribonucleoside 5'-diphosphate + ATP = a 2'-deoxyribonucleoside 5'-triphosphate + ADP. It carries out the reaction a ribonucleoside 5'-diphosphate + ATP = a ribonucleoside 5'-triphosphate + ADP. Functionally, major role in the synthesis of nucleoside triphosphates other than ATP. The ATP gamma phosphate is transferred to the NDP beta phosphate via a ping-pong mechanism, using a phosphorylated active-site intermediate. The sequence is that of Nucleoside diphosphate kinase from Sinorhizobium medicae (strain WSM419) (Ensifer medicae).